The sequence spans 395 residues: S-adenosylmethionine synthase (395 aa).

H14 is an ATP binding site. D16 provides a ligand contact to Mg(2+). E42 contributes to the K(+) binding site. L-methionine-binding residues include E55 and Q98. Residues 98-108 (QSPDIALGVDK) form a flexible loop region. ATP contacts are provided by residues 174-176 (DGK), 240-241 (RF), D249, 255-256 (RK), A272, and K276. D249 is a binding site for L-methionine. K280 serves as a coordination point for L-methionine.

Belongs to the AdoMet synthase family. In terms of assembly, homotetramer; dimer of dimers. Mg(2+) is required as a cofactor. It depends on K(+) as a cofactor.

The protein resides in the cytoplasm. It catalyses the reaction L-methionine + ATP + H2O = S-adenosyl-L-methionine + phosphate + diphosphate. The protein operates within amino-acid biosynthesis; S-adenosyl-L-methionine biosynthesis; S-adenosyl-L-methionine from L-methionine: step 1/1. Its function is as follows. Catalyzes the formation of S-adenosylmethionine (AdoMet) from methionine and ATP. The overall synthetic reaction is composed of two sequential steps, AdoMet formation and the subsequent tripolyphosphate hydrolysis which occurs prior to release of AdoMet from the enzyme. In Thermotoga neapolitana (strain ATCC 49049 / DSM 4359 / NBRC 107923 / NS-E), this protein is S-adenosylmethionine synthase.